Here is a 228-residue protein sequence, read N- to C-terminus: 30 kDa heat shock protein (228 aa).

Disordered stretches follow at residues E34–T53, K117–E136, and T144–E174. The sHSP domain occupies Q49–N228. The segment covering T144–Q158 has biased composition (low complexity).

Belongs to the small heat shock protein (HSP20) family.

It is found in the cytoplasm. The protein is 30 kDa heat shock protein (hsp30) of Neurospora crassa (strain ATCC 24698 / 74-OR23-1A / CBS 708.71 / DSM 1257 / FGSC 987).